A 204-amino-acid polypeptide reads, in one-letter code: tRNA (pseudouridine(54)-N(1))-methyltransferase (204 aa).

S-adenosyl-L-methionine is bound by residues Leu130, Gly157, 180 to 185 (LSPLEL), and Cys190.

It belongs to the methyltransferase superfamily. TrmY family. As to quaternary structure, homodimer.

Its subcellular location is the cytoplasm. The enzyme catalyses pseudouridine(54) in tRNA + S-adenosyl-L-methionine = N(1)-methylpseudouridine(54) in tRNA + S-adenosyl-L-homocysteine + H(+). Functionally, specifically catalyzes the N1-methylation of pseudouridine at position 54 (Psi54) in tRNAs. The protein is tRNA (pseudouridine(54)-N(1))-methyltransferase of Methanococcus aeolicus (strain ATCC BAA-1280 / DSM 17508 / OCM 812 / Nankai-3).